The primary structure comprises 305 residues: GTPase Era (305 aa).

The Era-type G domain occupies 11 to 181; the sequence is RSGFISFVGR…LDVITRLLPE (171 aa). The segment at 19–26 is G1; the sequence is GRPNTGKS. 19–26 serves as a coordination point for GTP; the sequence is GRPNTGKS. The tract at residues 45-49 is G2; it reads ETTRH. The G3 stretch occupies residues 66-69; that stretch reads DTPG. Residues 66–70 and 130–133 each bind GTP; these read DTPGL and TKVD. Residues 130 to 133 are G4; that stretch reads TKVD. Residues 160–162 are G5; it reads VSA. Residues 212-291 form the KH type-2 domain; it reads LKDELPHSVA…YLDLRIKVLK (80 aa).

Belongs to the TRAFAC class TrmE-Era-EngA-EngB-Septin-like GTPase superfamily. Era GTPase family. As to quaternary structure, monomer.

It is found in the cytoplasm. It localises to the cell membrane. An essential GTPase that binds both GDP and GTP, with rapid nucleotide exchange. Plays a role in 16S rRNA processing and 30S ribosomal subunit biogenesis and possibly also in cell cycle regulation and energy metabolism. The sequence is that of GTPase Era from Corynebacterium diphtheriae (strain ATCC 700971 / NCTC 13129 / Biotype gravis).